Reading from the N-terminus, the 196-residue chain is Elongation factor Ts (196 aa).

Residues 80–83 are involved in Mg(2+) ion dislocation from EF-Tu; sequence TDFV.

The protein belongs to the EF-Ts family.

Its subcellular location is the cytoplasm. Associates with the EF-Tu.GDP complex and induces the exchange of GDP to GTP. It remains bound to the aminoacyl-tRNA.EF-Tu.GTP complex up to the GTP hydrolysis stage on the ribosome. The sequence is that of Elongation factor Ts from Thermosipho melanesiensis (strain DSM 12029 / CIP 104789 / BI429).